Here is a 259-residue protein sequence, read N- to C-terminus: UPF0246 protein RD1_0358 (259 aa).

The protein belongs to the UPF0246 family.

The sequence is that of UPF0246 protein RD1_0358 from Roseobacter denitrificans (strain ATCC 33942 / OCh 114) (Erythrobacter sp. (strain OCh 114)).